A 602-amino-acid chain; its full sequence is RecBCD enzyme subunit RecD (602 aa).

Residue 171–178 (GGPGTGKT) participates in ATP binding.

Belongs to the RecD family. As to quaternary structure, heterotrimer of RecB, RecC and RecD. All subunits contribute to DNA-binding.

It carries out the reaction Couples ATP hydrolysis with the unwinding of duplex DNA at the replication fork by translocating in the 5'-3' direction. This creates two antiparallel DNA single strands (ssDNA). The leading ssDNA polymer is the template for DNA polymerase III holoenzyme which synthesizes a continuous strand.. It catalyses the reaction ATP + H2O = ADP + phosphate + H(+). A helicase/nuclease that prepares dsDNA breaks (DSB) for recombinational DNA repair. Binds to DSBs and unwinds DNA via a highly rapid and processive ATP-dependent bidirectional helicase activity. Unwinds dsDNA until it encounters a Chi (crossover hotspot instigator) sequence from the 3' direction. Cuts ssDNA a few nucleotides 3' to the Chi site. The properties and activities of the enzyme are changed at Chi. The Chi-altered holoenzyme produces a long 3'-ssDNA overhang and facilitates RecA-binding to the ssDNA for homologous DNA recombination and repair. Holoenzyme degrades any linearized DNA that is unable to undergo homologous recombination. In the holoenzyme this subunit has ssDNA-dependent ATPase and 5'-3' helicase activity. When added to pre-assembled RecBC greatly stimulates nuclease activity and augments holoenzyme processivity. Negatively regulates the RecA-loading ability of RecBCD. In Buchnera aphidicola subsp. Acyrthosiphon pisum (strain APS) (Acyrthosiphon pisum symbiotic bacterium), this protein is RecBCD enzyme subunit RecD.